A 423-amino-acid polypeptide reads, in one-letter code: Type II methyltransferase M.NlaIV (423 aa).

The SAM-dependent MTase C5-type domain maps to 4 to 423; sequence IKFIDLFSGM…AVSERLLHTL (420 aa). C80 is a catalytic residue.

This sequence belongs to the class I-like SAM-binding methyltransferase superfamily. C5-methyltransferase family.

The enzyme catalyses a 2'-deoxycytidine in DNA + S-adenosyl-L-methionine = a 5-methyl-2'-deoxycytidine in DNA + S-adenosyl-L-homocysteine + H(+). Its function is as follows. A methylase that recognizes the double-stranded sequence 5'-GGNNCC-3', methylates C-? on both strands, and protects the DNA from cleavage by the NlaIV endonuclease. The sequence is that of Type II methyltransferase M.NlaIV (nlaIVM) from Neisseria lactamica.